We begin with the raw amino-acid sequence, 360 residues long: Mannitol-1-phosphate 5-dehydrogenase (360 aa).

NAD(+) is bound at residue 6–17; that stretch reads ALHFGAGNIGRG.

Belongs to the mannitol dehydrogenase family.

The catalysed reaction is D-mannitol 1-phosphate + NAD(+) = beta-D-fructose 6-phosphate + NADH + H(+). This chain is Mannitol-1-phosphate 5-dehydrogenase, found in Mycoplasmopsis pulmonis (strain UAB CTIP) (Mycoplasma pulmonis).